The chain runs to 319 residues: D-alanine--D-alanine ligase B (319 aa).

Residues 117-312 (KQVWQSLGPA…FQQLVLAILA (196 aa)) enclose the ATP-grasp domain. 143–198 (ATELGFPLIVKPAHEGSSIGMAKVNSVDELIAAWKAASTYDSQVLVEQWIQGPEFT) provides a ligand contact to ATP. Residues aspartate 266, glutamate 279, and asparagine 281 each contribute to the Mg(2+) site.

The protein belongs to the D-alanine--D-alanine ligase family. Mg(2+) is required as a cofactor. It depends on Mn(2+) as a cofactor.

The protein localises to the cytoplasm. It catalyses the reaction 2 D-alanine + ATP = D-alanyl-D-alanine + ADP + phosphate + H(+). It participates in cell wall biogenesis; peptidoglycan biosynthesis. Cell wall formation. The protein is D-alanine--D-alanine ligase B of Pseudomonas syringae pv. tomato (strain ATCC BAA-871 / DC3000).